The chain runs to 455 residues: Phosphoglucosamine mutase (455 aa).

Serine 108 (phosphoserine intermediate) is an active-site residue. Positions 108, 246, 248, and 250 each coordinate Mg(2+). Serine 108 is subject to Phosphoserine.

Belongs to the phosphohexose mutase family. Mg(2+) serves as cofactor. Post-translationally, activated by phosphorylation.

It carries out the reaction alpha-D-glucosamine 1-phosphate = D-glucosamine 6-phosphate. In terms of biological role, catalyzes the conversion of glucosamine-6-phosphate to glucosamine-1-phosphate. The protein is Phosphoglucosamine mutase of Frankia casuarinae (strain DSM 45818 / CECT 9043 / HFP020203 / CcI3).